A 28-amino-acid chain; its full sequence is DDCTTYCYGVHCCPPAFKCAASPSCKQT.

3 cysteine pairs are disulfide-bonded: Cys3/Cys13, Cys7/Cys19, and Cys12/Cys25.

As to expression, expressed by the venom duct.

It is found in the secreted. In terms of biological role, probable neurotoxin with unknown target. Possibly targets ion channels. In Californiconus californicus (California cone), this protein is Conotoxin Cal6.43b.